The chain runs to 286 residues: Hypersensitive-induced response protein 1 (286 aa).

Residue Gly2 is the site of N-myristoyl glycine attachment. Residues 114 to 190 (LDDVFEQKND…EKILQIKRAE (77 aa)) are a coiled coil.

Self-interacts and forms heteromers. Interacts with NB-LRR class of R proteins before R proteins (e.g. RPS2 or RPM1) are activated by the effectors. Interacts with LRR1.

The protein localises to the cell membrane. Positive regulator of hypersensitive response (HR)-like cell death. May be involved in potassium ion channel regulation. The chain is Hypersensitive-induced response protein 1 from Arabidopsis thaliana (Mouse-ear cress).